The primary structure comprises 350 residues: S-adenosylmethionine:tRNA ribosyltransferase-isomerase (350 aa).

Belongs to the QueA family. Monomer.

The protein localises to the cytoplasm. The enzyme catalyses 7-aminomethyl-7-carbaguanosine(34) in tRNA + S-adenosyl-L-methionine = epoxyqueuosine(34) in tRNA + adenine + L-methionine + 2 H(+). The protein operates within tRNA modification; tRNA-queuosine biosynthesis. Functionally, transfers and isomerizes the ribose moiety from AdoMet to the 7-aminomethyl group of 7-deazaguanine (preQ1-tRNA) to give epoxyqueuosine (oQ-tRNA). The chain is S-adenosylmethionine:tRNA ribosyltransferase-isomerase from Saccharophagus degradans (strain 2-40 / ATCC 43961 / DSM 17024).